Consider the following 1063-residue polypeptide: NAD-specific glutamate dehydrogenase (1063 aa).

It belongs to the Glu/Leu/Phe/Val dehydrogenases family. Highly divergent. As to quaternary structure, homotetramer.

It catalyses the reaction L-glutamate + NAD(+) + H2O = 2-oxoglutarate + NH4(+) + NADH + H(+). With respect to regulation, allosterically activated by NADP(+). This is NAD-specific glutamate dehydrogenase from Achlya klebsiana.